Here is a 148-residue protein sequence, read N- to C-terminus: Augurin (148 aa).

A signal peptide spans 1–31 (MGTSSARPAVLALAGLALLLLLCLGPGDVSG). Propeptides lie at residues 32–68 (NKLK…LKRA) and 133–148 (SREG…YDDY).

The protein belongs to the augurin family. In terms of tissue distribution, expressed in the brain, with expression in the choroid plexus and the ventricular ependymal cells (at protein level).

It localises to the secreted. Its subcellular location is the cytoplasm. The protein resides in the apical cell membrane. Its function is as follows. Probable hormone that may attenuate cell proliferation and induce senescence of oligodendrocyte and neural precursor cells in the central nervous system. ECRG4-induced senescence is characterized by G1 arrest, RB1 dephosphorylation and accelerated CCND1 and CCND3 proteasomal degradation. This is Augurin from Rattus norvegicus (Rat).